Here is a 329-residue protein sequence, read N- to C-terminus: Epoxide hydrolase (329 aa).

Residues 35-308 enclose the AB hydrolase-1 domain; that stretch reads PAVLFCHGFP…DNVGHWVQHE (274 aa). Asp111 serves as the catalytic Nucleophile. Residue Tyr242 is the Proton donor of the active site. Catalysis depends on His303, which acts as the Proton acceptor.

It belongs to the AB hydrolase superfamily. Epoxide hydrolase family. In terms of assembly, homodimer.

The enzyme catalyses an epoxide + H2O = an ethanediol. The catalysed reaction is (R)-styrene oxide + H2O = (R)-styrene glycol. It carries out the reaction (S)-styrene oxide + H2O = (S)-styrene glycol. It catalyses the reaction 3,4-epoxy-1-cyclohexene + H2O = cyclohex-3-ene-1,2-diol. Functionally, catalyzes the hydrolysis of various epoxides into diols. In vitro, shows the strongest activity toward aromatic and cyclic aliphatic epoxide compounds, since it shows strong activity toward (R)-styrene oxide, (S)-styrene oxide, and 3,4-epoxy-1-cyclohexene, but very weak activity toward (R)-epichlorohydrin, (S)-epichlorohydrin, and 1,2-epoxy-9-decene. The polypeptide is Epoxide hydrolase (Caballeronia sordidicola (Burkholderia sordidicola)).